Here is a 93-residue protein sequence, read N- to C-terminus: Large ribosomal subunit protein bL31B (93 aa).

It belongs to the bacterial ribosomal protein bL31 family. Type B subfamily. In terms of assembly, part of the 50S ribosomal subunit.

This is Large ribosomal subunit protein bL31B from Pseudomonas syringae pv. syringae (strain B728a).